The chain runs to 260 residues: 5'-nucleotidase SurE (260 aa).

A divalent metal cation-binding residues include Asp-13, Asp-14, Ser-44, and Asn-102.

It belongs to the SurE nucleotidase family. The cofactor is a divalent metal cation.

The protein localises to the cytoplasm. It carries out the reaction a ribonucleoside 5'-phosphate + H2O = a ribonucleoside + phosphate. Its function is as follows. Nucleotidase that shows phosphatase activity on nucleoside 5'-monophosphates. This chain is 5'-nucleotidase SurE, found in Christiangramia forsetii (strain DSM 17595 / CGMCC 1.15422 / KT0803) (Gramella forsetii).